Here is a 508-residue protein sequence, read N- to C-terminus: Glycerol kinase (508 aa).

Thr17 serves as a coordination point for ADP. Residues Thr17, Thr18, and Ser19 each coordinate ATP. Thr17 is a sn-glycerol 3-phosphate binding site. Arg21 contributes to the ADP binding site. Residues Arg87, Glu88, Tyr139, and Asp256 each contribute to the sn-glycerol 3-phosphate site. 5 residues coordinate glycerol: Arg87, Glu88, Tyr139, Asp256, and Gln257. Residues Thr278 and Gly322 each contribute to the ADP site. ATP-binding residues include Thr278, Gly322, Gln326, and Ala423. ADP is bound by residues Ala423 and Asn427.

This sequence belongs to the FGGY kinase family.

It carries out the reaction glycerol + ATP = sn-glycerol 3-phosphate + ADP + H(+). Its pathway is polyol metabolism; glycerol degradation via glycerol kinase pathway; sn-glycerol 3-phosphate from glycerol: step 1/1. With respect to regulation, inhibited by fructose 1,6-bisphosphate (FBP). Its function is as follows. Key enzyme in the regulation of glycerol uptake and metabolism. Catalyzes the phosphorylation of glycerol to yield sn-glycerol 3-phosphate. The polypeptide is Glycerol kinase (Corynebacterium efficiens (strain DSM 44549 / YS-314 / AJ 12310 / JCM 11189 / NBRC 100395)).